We begin with the raw amino-acid sequence, 422 residues long: Tryptophan synthase beta chain 2 (422 aa).

K111 carries the N6-(pyridoxal phosphate)lysine modification.

This sequence belongs to the TrpB family. Tetramer of two alpha and two beta chains. It depends on pyridoxal 5'-phosphate as a cofactor.

It catalyses the reaction (1S,2R)-1-C-(indol-3-yl)glycerol 3-phosphate + L-serine = D-glyceraldehyde 3-phosphate + L-tryptophan + H2O. The protein operates within amino-acid biosynthesis; L-tryptophan biosynthesis; L-tryptophan from chorismate: step 5/5. The beta subunit is responsible for the synthesis of L-tryptophan from indole and L-serine. The chain is Tryptophan synthase beta chain 2 (trpB2) from Thermotoga maritima (strain ATCC 43589 / DSM 3109 / JCM 10099 / NBRC 100826 / MSB8).